Consider the following 195-residue polypeptide: Cyclin-dependent kinase inhibitor 7 (195 aa).

Residues 1–11 (MSETKPKRDSE) are compositionally biased toward basic and acidic residues. Disordered stretches follow at residues 1–50 (MSET…SVSD), 61–80 (EEED…SSET), and 117–154 (SSEN…TQAE). Low complexity-rich tracts occupy residues 37 to 50 (SSSS…SVSD) and 68 to 80 (SSSI…SSET). The residue at position 151 (T151) is a Phosphothreonine; by KIN10.

Belongs to the CDI family. ICK/KRP subfamily. In terms of assembly, specifically interacts with CDKA-1, but not with CDKB1-1. Interacts with CYCD4-1. Binds to FBL17. Post-translationally, ubiquitinated by SCF(FBL17). Ubiquitination leads to its subsequent degradation, thus controlling cell cycle progression. Expressed in flowers, in developing pollen, and at lower levels in roots and leaves.

It localises to the nucleus. The protein resides in the nucleoplasm. Binds and inhibits CYCD2-1/CDKA-1 complex kinase activity. May target specifically CDKA-1. The polypeptide is Cyclin-dependent kinase inhibitor 7 (KRP7) (Arabidopsis thaliana (Mouse-ear cress)).